Consider the following 380-residue polypeptide: Protein GOLM2 (380 aa).

An N-acetylmethionine modification is found at Met-1. Over 1–14 (MVGFGANRRAGRLP) the chain is Cytoplasmic. A helical; Signal-anchor for type II membrane protein membrane pass occupies residues 15 to 35 (SLVLAVLLVVIAVLAFNYWSI). Residues 35 to 195 (ISSRHVLLQE…QFLQEQKQEA (161 aa)) adopt a coiled-coil conformation. The Lumenal portion of the chain corresponds to 36–380 (SSRHVLLQEE…YGKQRFNDAL (345 aa)). 2 stretches are compositionally biased toward basic and acidic residues: residues 192 to 212 (KQEA…DNHA) and 227 to 247 (KNEE…KRGG). The interval 192-254 (KQEAHKFESK…RGGDAGMPGI (63 aa)) is disordered. Phosphoserine occurs at positions 233 and 275. Positions 280–380 (ESHQVISHLP…YGKQRFNDAL (101 aa)) are disordered. The span at 305–321 (NHNGNSRTSKQNPSNPL) shows a compositional bias: polar residues. Basic and acidic residues predominate over residues 344 to 380 (ATKDRAGDFHKLKQNDEERELQMDPADYGKQRFNDAL).

This sequence belongs to the GOLM family.

Its subcellular location is the membrane. This chain is Protein GOLM2 (GOLM2), found in Bos taurus (Bovine).